A 473-amino-acid chain; its full sequence is Adenosylhomocysteinase (473 aa).

Threonine 64, aspartate 139, and glutamate 199 together coordinate substrate. An NAD(+)-binding site is contributed by 200–202 (TTT). Positions 229 and 233 each coordinate substrate. Residues asparagine 234, 263–268 (GYGDVG), glutamate 286, asparagine 321, 342–344 (IGH), and asparagine 387 contribute to the NAD(+) site.

The protein belongs to the adenosylhomocysteinase family. It depends on NAD(+) as a cofactor.

Its subcellular location is the cytoplasm. The catalysed reaction is S-adenosyl-L-homocysteine + H2O = L-homocysteine + adenosine. It participates in amino-acid biosynthesis; L-homocysteine biosynthesis; L-homocysteine from S-adenosyl-L-homocysteine: step 1/1. In terms of biological role, may play a key role in the regulation of the intracellular concentration of adenosylhomocysteine. The protein is Adenosylhomocysteinase of Burkholderia mallei (strain SAVP1).